The primary structure comprises 273 residues: Tryptophan synthase alpha chain (273 aa).

Active-site proton acceptor residues include glutamate 49 and aspartate 60.

This sequence belongs to the TrpA family. In terms of assembly, tetramer of two alpha and two beta chains.

The enzyme catalyses (1S,2R)-1-C-(indol-3-yl)glycerol 3-phosphate + L-serine = D-glyceraldehyde 3-phosphate + L-tryptophan + H2O. The protein operates within amino-acid biosynthesis; L-tryptophan biosynthesis; L-tryptophan from chorismate: step 5/5. Functionally, the alpha subunit is responsible for the aldol cleavage of indoleglycerol phosphate to indole and glyceraldehyde 3-phosphate. In Albidiferax ferrireducens (strain ATCC BAA-621 / DSM 15236 / T118) (Rhodoferax ferrireducens), this protein is Tryptophan synthase alpha chain.